A 122-amino-acid polypeptide reads, in one-letter code: Large ribosomal subunit protein uL14 (122 aa).

It belongs to the universal ribosomal protein uL14 family. Part of the 50S ribosomal subunit. Forms a cluster with proteins L3 and L19. In the 70S ribosome, L14 and L19 interact and together make contacts with the 16S rRNA in bridges B5 and B8.

Binds to 23S rRNA. Forms part of two intersubunit bridges in the 70S ribosome. The polypeptide is Large ribosomal subunit protein uL14 (Rickettsia felis (strain ATCC VR-1525 / URRWXCal2) (Rickettsia azadi)).